The primary structure comprises 189 residues: UPF0301 protein RPR_01165 (189 aa).

This sequence belongs to the UPF0301 (AlgH) family.

The protein is UPF0301 protein RPR_01165 of Rickettsia peacockii (strain Rustic).